Here is a 102-residue protein sequence, read N- to C-terminus: Small ribosomal subunit protein uS10 (102 aa).

The protein belongs to the universal ribosomal protein uS10 family. In terms of assembly, part of the 30S ribosomal subunit.

Functionally, involved in the binding of tRNA to the ribosomes. This is Small ribosomal subunit protein uS10 from Arthrobacter sp. (strain FB24).